We begin with the raw amino-acid sequence, 404 residues long: Omega-3 fatty acid desaturase, chloroplastic (404 aa).

The interval 28–50 is disordered; that stretch reads TVDSSSSPPIEEEPKTQRFDPGA. The short motif at 121 to 125 is the Histidine box-1 element; that stretch reads HDCGH. The Histidine box-2 signature appears at 157–161; that stretch reads HRTHH. Positions 324–328 match the Histidine box-3 motif; it reads HVIHH.

The protein belongs to the fatty acid desaturase type 1 family.

Its subcellular location is the plastid. The protein localises to the chloroplast membrane. Its pathway is lipid metabolism; polyunsaturated fatty acid biosynthesis. Its function is as follows. Chloroplast omega-3 fatty acid desaturase introduces the third double bond in the biosynthesis of 16:3 and 18:3 fatty acids, important constituents of plant membranes. It is thought to use ferredoxin as an electron donor and to act on fatty acids esterified to galactolipids, sulfolipids and phosphatidylglycerol. The sequence is that of Omega-3 fatty acid desaturase, chloroplastic (FAD7) from Brassica napus (Rape).